A 1654-amino-acid polypeptide reads, in one-letter code: MSKARSRNSLLSSSNRAQFGNSTQDELLKLKFSMEKPDIGLYPLNDLDNGVDLNGDNSRSQHTAGSGVLSGNEVTYPDYKPWKDHTALPNDKKEQEHQKLNNAAYLNKGYFETPVVANEYYSARNLIQATVFSSTENCNEVLKELSQHLANAYKTRNEIINKIKYESNNFKIPPRVTLTASKKESWLKDLANPDLALSKIAEKIPHGIRNKILIDAVCNKSVPINRALWFTKCVLFGELVALRRKHQSRMSLNSPIPQSLDINTPEKFEIHWLQEWTQQVADYIYKFSKESSNFNTIERKQYYMNKMTYLLTYIQALYVEFLLDKSFFLALIIKFLKEGLPLDPLHVSELLSSTRSETDDLIQESWIEDLDLNYGQRLFALTLIKIFWNDILKFDYICKELSETLLLNYLFISKINAYSFKQSHVQNHKASIPEPLRQKILDMIGDTITYLFKFNTNVFIIPNYWMLINGVLFTILLNKNVTKTEGELDEISKQFDLIKYRNESLILNMRNVQPSITDRATPNSAGRRGSSIWNQSFVSAAESTATKIDIFDNEATFINRSSDDILKIISQLDSLKLNDELANFLKPVTSSSALTSTAIKGCPKWRTNLKVVLYWCITRHRNSRESSEDILIICNFLKRKVLQTLGPTRSSSQLKAEFESEILDIIYNIADTNSSKVVNYDLYVLINELYQLKVLTIASYLRKLIASGIFYVAPDAEDNILNDNSNSLVKTHLSILQNLPVINNRQCDSILKKWTSTGFNFKEKFEMGQEILKRELIDRIVNNTFDDQFESHIVYVKDLNVGLKFLLVNWVTNELKSAITESPKLIHINPLIISNLFNFYSICDNLTVFFKVLVKFILKNEGGMIIFYLESLYLIARLIIKHFKLVKFIAGNSYGSNSTAYELFKLIIQNYKDCKTREFDYFKFDQVWNFIDTAVESNYSSDKNTDSRSSGKRSGIFNKEQFDSPMKINTSENVIAKMEDRYTSADFRNDLDLLLESTFQPMDSNEVSEVVATLKLEFEENEMKSHRNVVPKVLDLLKSNLTEESEGLAAKLLINSQYLIKSDDVNAFDKLVQDYILELVKSDMEILLVAKFLKKLIVHEIIRINDLFAFFEPIAEDPAFRVKLKALMFDLVIGLSDEEREYLSNSQILQLEIMRQWYRERSTSSFLVLILKGIKTIEGSIFDCPLMEKYGSSIFRILNALIVANTKLLSDELISKISTEDSIRLLSTLNNENFTPINSLQDLERIASEVDEFNLPIFQLLLRVLTIKELSPLQENEIQERLKVLLESFLENLSFGFTPMNSYFGELFIYLPWEYVVSILGMLEDKFLCSTTFNFDQWDNDKSVLSLTNSVGNTNLLPVFNDYFKKFSSSSSNVVESSSSFFQALSKFLSKLLLIVNSDNCLEDTFEDTSSAISIFLRILIIHKLTLTRLIVTQDGEQFQFIKNLILLINSKFIAEGNEKLRILLYDLLLLMKSSVTEEVSKQTENELSEGTSPGFGMTAQSPPPVEDASKITEPLSSARPSSEAASFQTNPISTYDQVSSLFNLPEPTETNPFKDYITEDRVECALTLSEDELQSGGDIHGFNESNLVLISSSNDSTFSGAFALITNPHQRPKGQPFKLRSFEILEGTSTTSLNDGCINLQLFDSYTTKENPP.

2 disordered regions span residues 52–72 (DLNG…LSGN) and 1481–1530 (SKQT…SFQT). The span at 1515–1530 (PLSSARPSSEAASFQT) shows a compositional bias: polar residues.

Belongs to the Mediator complex subunit 12 family. As to quaternary structure, component of the SRB8-11 complex, which itself associates with the Mediator complex.

The protein resides in the nucleus. Functionally, component of the SRB8-11 complex. The SRB8-11 complex is a regulatory module of the Mediator complex which is itself involved in regulation of basal and activated RNA polymerase II-dependent transcription. The SRB8-11 complex may be involved in the transcriptional repression of a subset of genes regulated by Mediator. It may inhibit the association of the Mediator complex with RNA polymerase II to form the holoenzyme complex. The chain is Mediator of RNA polymerase II transcription subunit 12 (SRB8) from Scheffersomyces stipitis (strain ATCC 58785 / CBS 6054 / NBRC 10063 / NRRL Y-11545) (Yeast).